Here is a 136-residue protein sequence, read N- to C-terminus: Small ribosomal subunit protein uS8c (136 aa).

It belongs to the universal ribosomal protein uS8 family. As to quaternary structure, part of the 30S ribosomal subunit.

It localises to the plastid. It is found in the chloroplast. In terms of biological role, one of the primary rRNA binding proteins, it binds directly to 16S rRNA central domain where it helps coordinate assembly of the platform of the 30S subunit. The sequence is that of Small ribosomal subunit protein uS8c (rps8) from Tetradesmus obliquus (Green alga).